The sequence spans 60 residues: U20-myrmicitoxin-Mri1a (60 aa).

Positions 1 to 24 (MKSVILLFAVIAIIVAVIIPAING) are cleaved as a signal peptide. A propeptide spanning residues 25–34 (ESSSNPSANA) is cleaved from the precursor.

It belongs to the formicidae venom precursor-01 superfamily. Expressed by the venom gland.

It localises to the secreted. Induces paralysis 5 minutes after injection into blowflies (L.caesar), and then death within 24 hours. May have antimicrobial properties, like most ant linear peptides. The protein is U20-myrmicitoxin-Mri1a of Manica rubida (European giant red ant).